Here is a 154-residue protein sequence, read N- to C-terminus: Jupiter microtubule associated homolog 1 (154 aa).

Methionine 1 is subject to N-acetylmethionine. Over residues 1–19 the composition is skewed to polar residues; it reads MTTTTTFKGVDPNSRNSSR. Residues 1–154 are disordered; that stretch reads MTTTTTFKGV…PGGKSSLVLG (154 aa). N-acetylthreonine; in Hematological and neurological expressed 1 protein, N-terminally processed is present on threonine 2. Serine 28 and serine 31 each carry phosphoserine. Position 54 is a phosphothreonine (threonine 54). Phosphoserine occurs at positions 71, 87, 88, and 92. Polar residues predominate over residues 79–91; the sequence is SPGTQRSNSSEAS. A compositionally biased stretch (basic and acidic residues) spans 96–108; it reads LDLKGEGDMHENV. The span at 125–138 shows a compositional bias: pro residues; it reads PAAPVPSPVAPAPV. Serine 131 is subject to Phosphoserine. The residue at position 148 (lysine 148) is an N6-acetyllysine.

The protein belongs to the JUPITER family. As to quaternary structure, interacts with the complex composed, at least, of APC, CTNNB1 and GSK3B; the interaction takes place with the inactive form of GSK3B (phosphorylated at 'Ser-9'). Expressed in yolk sac, fetal brain, brain, spleen and bone marrow.

Its subcellular location is the nucleus. The protein resides in the cytoplasm. In terms of biological role, modulates negatively AKT-mediated GSK3B signaling. Induces CTNNB1 'Ser-33' phosphorylation and degradation through the suppression of the inhibitory 'Ser-9' phosphorylation of GSK3B, which represses the function of the APC:CTNNB1:GSK3B complex and the interaction with CDH1/E-cadherin in adherent junctions. Plays a role in the regulation of cell cycle and cell adhesion. Has an inhibitory role on AR-signaling pathway through the induction of receptor proteasomal degradation. In Mus musculus (Mouse), this protein is Jupiter microtubule associated homolog 1.